Here is a 312-residue protein sequence, read N- to C-terminus: Glycerol 2-dehydrogenase (NADP(+)) (312 aa).

Y56 functions as the Proton donor in the catalytic mechanism. H112 contributes to the substrate binding site. 220-274 is a binding site for NADP(+); sequence SPLGSTDAPLLKEPVILEIAKKNNVQPGHVVISWHVQRGYVVLPKSVNPDRIKTN. S306 carries the post-translational modification Phosphoserine.

Belongs to the aldo/keto reductase family.

It localises to the cytoplasm. It catalyses the reaction glycerol + NADP(+) = dihydroxyacetone + NADPH + H(+). Its function is as follows. Glycerol dehydrogenase involved in glycerol catabolism under microaerobic conditions. Has mRNA binding activity. The sequence is that of Glycerol 2-dehydrogenase (NADP(+)) (GCY1) from Saccharomyces cerevisiae (strain ATCC 204508 / S288c) (Baker's yeast).